The chain runs to 369 residues: 3-dehydroquinate synthase (369 aa).

NAD(+) is bound by residues 110–114 (GVIGD), 134–135 (TT), Lys-147, Lys-156, and 174–177 (TLKT). Zn(2+) is bound by residues Glu-189, His-254, and His-271.

This sequence belongs to the sugar phosphate cyclases superfamily. Dehydroquinate synthase family. Co(2+) is required as a cofactor. It depends on Zn(2+) as a cofactor. Requires NAD(+) as cofactor.

It is found in the cytoplasm. It carries out the reaction 7-phospho-2-dehydro-3-deoxy-D-arabino-heptonate = 3-dehydroquinate + phosphate. Its pathway is metabolic intermediate biosynthesis; chorismate biosynthesis; chorismate from D-erythrose 4-phosphate and phosphoenolpyruvate: step 2/7. Its function is as follows. Catalyzes the conversion of 3-deoxy-D-arabino-heptulosonate 7-phosphate (DAHP) to dehydroquinate (DHQ). The sequence is that of 3-dehydroquinate synthase from Cyanothece sp. (strain PCC 7425 / ATCC 29141).